A 489-amino-acid chain; its full sequence is Rhamnulokinase (489 aa).

13–17 is an ATP binding site; sequence ASSGR. C68 and C222 form a disulfide bridge. Residues G83 and 236 to 238 each bind substrate; that span reads HDT. D237 functions as the Proton acceptor in the catalytic mechanism. T259 contributes to the ATP binding site. A substrate-binding site is contributed by N296. Q304 is an ATP binding site. Cysteines 353 and 370 form a disulfide. Residue G402 participates in ATP binding. The cysteines at positions 413 and 417 are disulfide-linked.

This sequence belongs to the rhamnulokinase family. Monomer. The cofactor is Mg(2+).

The catalysed reaction is L-rhamnulose + ATP = L-rhamnulose 1-phosphate + ADP + H(+). The protein operates within carbohydrate degradation; L-rhamnose degradation; glycerone phosphate from L-rhamnose: step 2/3. In terms of biological role, involved in the catabolism of L-rhamnose (6-deoxy-L-mannose). Catalyzes the transfer of the gamma-phosphate group from ATP to the 1-hydroxyl group of L-rhamnulose to yield L-rhamnulose 1-phosphate. The chain is Rhamnulokinase from Escherichia coli (strain K12 / DH10B).